A 247-amino-acid polypeptide reads, in one-letter code: Acidic leucine-rich nuclear phosphoprotein 32 family member A (247 aa).

T15 carries the phosphothreonine modification. Residue S17 is modified to Phosphoserine. LRR repeat units lie at residues 18–41, 43–64, 65–87, and 89–110; these read DVKE…TDEF, ELEF…PKLN, KLKK…AEKC, and NLKH…EPLK. One can recognise an LRRCT domain in the interval 123-161; the sequence is CEVTNLNAYRENVFKLLPQVMYLDGYDRDNKEAPDSDVE. Residues 150–172 form a necessary for tumor-suppressive function region; it reads RDNKEAPDSDVEGYVEDDDEEDE. The segment at 150–247 is disordered; that stretch reads RDNKEAPDSD…EPDDEGQEDD (98 aa). A compositionally biased stretch (acidic residues) spans 157–230; sequence DSDVEGYVED…EDEEDAAEEE (74 aa). Phosphoserine is present on residues S158 and S202. Residues 165–247 form an interaction with E4F1 region; it reads EDDDEEDEDE…EPDDEGQEDD (83 aa).

Belongs to the ANP32 family. In terms of assembly, component of the SET complex, composed of at least ANP32A, APEX1, HMGB2, NME1, SET and TREX1. Directly interacts with SET. Interacts with ATXN1/SCA1. Interacts with MAP1B. Interacts with ELAVL1. Part of the INHAT (inhibitor of histone acetyltransferases) complex. Interacts with E4F1. In terms of processing, phosphorylated on serine residues, at least in part by casein kinase 2/CK2. Some glutamate residues are glycylated by TTLL8. This modification occurs exclusively on glutamate residues and results in a glycine chain on the gamma-carboxyl group. Widely distributed in the central nervous system, with an abundant expression in the cerebellum.

It localises to the nucleus. Its subcellular location is the cytoplasm. The protein localises to the endoplasmic reticulum. Functionally, multifunctional protein that is involved in the regulation of many processes including tumor suppression, apoptosis, cell cycle progression or transcription. Promotes apoptosis by favouring the activation of caspase-9/CASP9 and allowing apoptosome formation. In addition, plays a role in the modulation of histone acetylation and transcription as part of the INHAT (inhibitor of histone acetyltransferases) complex. Inhibits the histone-acetyltranferase activity of EP300/CREBBP (CREB-binding protein) and EP300/CREBBP-associated factor by histone masking. Preferentially binds to unmodified histone H3 and sterically inhibiting its acetylation and phosphorylation leading to cell growth inhibition. Participates in other biochemical processes such as regulation of mRNA nuclear-to-cytoplasmic translocation and stability by its association with ELAVL1 (Hu-antigen R). Plays a role in E4F1-mediated transcriptional repression as well as inhibition of protein phosphatase 2A. In Rattus norvegicus (Rat), this protein is Acidic leucine-rich nuclear phosphoprotein 32 family member A (Anp32a).